Consider the following 507-residue polypeptide: ATP synthase subunit alpha, chloroplastic (507 aa).

170–177 contacts ATP; the sequence is GDRQTGKT.

Belongs to the ATPase alpha/beta chains family. As to quaternary structure, F-type ATPases have 2 components, CF(1) - the catalytic core - and CF(0) - the membrane proton channel. CF(1) has five subunits: alpha(3), beta(3), gamma(1), delta(1), epsilon(1). CF(0) has four main subunits: a, b, b' and c.

The protein resides in the plastid. Its subcellular location is the chloroplast thylakoid membrane. It catalyses the reaction ATP + H2O + 4 H(+)(in) = ADP + phosphate + 5 H(+)(out). Its function is as follows. Produces ATP from ADP in the presence of a proton gradient across the membrane. The alpha chain is a regulatory subunit. In Nicotiana tabacum (Common tobacco), this protein is ATP synthase subunit alpha, chloroplastic.